A 322-amino-acid polypeptide reads, in one-letter code: Corticotropin-releasing factor-binding protein (322 aa).

The signal sequence occupies residues 1-24 (MSPNFKLQCHFILIFLTALRGESR). Intrachain disulfides connect C60–C81, C104–C141, C183–C205, C237–C264, and C277–C318. A glycan (N-linked (GlcNAc...) asparagine) is linked at N204.

The protein belongs to the CRF-binding protein family.

The protein localises to the secreted. Functionally, binds CRF and inactivates it. May prevent inappropriate pituitary-adrenal stimulation in pregnancy. The sequence is that of Corticotropin-releasing factor-binding protein (CRHBP) from Homo sapiens (Human).